We begin with the raw amino-acid sequence, 539 residues long: Chloride channel CLIC-like protein 1 (539 aa).

Positions 1-18 (MLCRLLLCECLLLITGYA) are cleaved as a signal peptide. The Lumenal segment spans residues 19-184 (HDDDWIDPTD…EDYFGVDPYN (166 aa)). A disordered region spans residues 41-61 (KSQVRSGTSEKKEVSPDSSEA). The chain crosses the membrane as a helical span at residues 185-205 (VFMVLLCLLCLVVLVATELWT). Over 206–215 (YVRWYTQMKR) the chain is Cytoplasmic. A helical membrane pass occupies residues 216 to 236 (IFIISFLLSLAWNWIYLYKMA). The Lumenal segment spans residues 237–329 (FAQHQANIAG…GEFIKALMKE (93 aa)). A helical membrane pass occupies residues 330 to 350 (IPVLLQIPVLAILALAVLSFC). The Cytoplasmic portion of the chain corresponds to 351 to 539 (YGAGRSVPML…GTEPVSSPCG (189 aa)). The disordered stretch occupies residues 361 to 410 (RHFGGPDREPPRALEPDDRRRQKGLDYRLHGGAGDADFSYRGPAGSIEQG). Residues 364–389 (GGPDREPPRALEPDDRRRQKGLDYRL) show a composition bias toward basic and acidic residues. Residues Ser-429, Ser-433, and Ser-459 each carry the phosphoserine modification. A disordered region spans residues 444-539 (DTEAQEHPEV…GTEPVSSPCG (96 aa)). Residues 475-485 (STPTEYSQSAK) show a composition bias toward polar residues. Phosphothreonine is present on Thr-476. 3 positions are modified to phosphoserine: Ser-498, Ser-513, and Ser-521. Residues 512 to 521 (CSPPGGCPPS) are compositionally biased toward low complexity.

Belongs to the chloride channel MCLC family. As to quaternary structure, homomultimers. Interacts with mitochondrial protein PIGBOS1 (via C-terminus); the interaction occurs at the mitochondria-associated endoplasmic reticulum (ER) membrane, a zone of contact between the ER and mitochondrial membranes, but does not appear to play a role in ER-mitochondria tethering and is not affected by ER stress. Interacts with CALR. In terms of tissue distribution, expressed in cerebellum (at protein level).

The protein resides in the endoplasmic reticulum membrane. It carries out the reaction chloride(in) = chloride(out). The enzyme catalyses bromide(in) = bromide(out). The catalysed reaction is nitrate(in) = nitrate(out). It catalyses the reaction fluoride(in) = fluoride(out). Its activity is regulated as follows. Activated by membrane phosphatidylinositol 4,5-bisphosphate (PI(4,5)P2, PIP2). Inhibited by lumenal Ca(2+). In terms of biological role, anion-selective channel with Ca(2+)-dependent and voltage-independent gating. Permeable to small monovalent anions with selectivity for bromide &gt; chloride &gt; nitrate &gt; fluoride. Operates in the endoplasmic reticulum (ER) membrane where it mediates chloride efflux to compensate for the loss of positive charges from the ER lumen upon Ca(2+) release. Contributes to the maintenance of ER Ca(2+) pools and activation of unfolded protein response to prevent accumulation of misfolded proteins in the ER lumen. Particularly involved in ER homeostasis mechanisms underlying motor neurons and retinal photoreceptors survival. The chain is Chloride channel CLIC-like protein 1 from Mus musculus (Mouse).